Reading from the N-terminus, the 328-residue chain is Neuronal membrane glycoprotein M6-b (328 aa).

Residues 1-22 are disordered; it reads MKPAMETAAEENTEQSQERKVN. Residues 71–91 form a helical membrane-spanning segment; it reads GGVPYASLVATILCFSGVALF. N113 carries an N-linked (GlcNAc...) asparagine glycan. A run of 2 helical transmembrane segments spans residues 130–150 and 176–196; these read VIYGIASFFFLYGIILLAEGF and FVFLTYVLGVAWLGVFGFSAV. N217 carries N-linked (GlcNAc...) asparagine glycosylation. A helical transmembrane segment spans residues 265–285; it reads FIVACAGAGATVIALIHFLMI. 3 positions are modified to phosphoserine: S318, S320, and S326.

This sequence belongs to the myelin proteolipid protein family. Interacts with SERT. As to expression, widely expressed. In the brain, expressed in neurons and oligodendrocytes.

It is found in the membrane. The protein localises to the cell membrane. In terms of biological role, may be involved in neural development. Involved in regulation of osteoblast function and bone formation. Involved in matrix vesicle release by osteoblasts; this function seems to involve maintenance of the actin cytoskeleton. May be involved in cellular trafficking of SERT and thereby in regulation of serotonin uptake. This Mus musculus (Mouse) protein is Neuronal membrane glycoprotein M6-b (Gpm6b).